A 459-amino-acid chain; its full sequence is MENEKKLFKKLYSWKEISKHNTIENGIWISIDGLVYDITKFIKHHPGGEQVLILAAGRDVTNLFESYHPMTDLPSKMLKQYEIGQVSTMEFPKYVEKSKFYSTLKERVREHFKKSNKDPKFAFGIIARLIFVYWFLITSYYVSHYAFIENFYLNCLLAIVYSLSNSLFSLHMMHDACHSAISHNPKVWKWLGATYDLFIGASFFYWCNQHVIGHHVYTNIRNADPDIGDSEVDFRIVTPYQNKYWIYKYQHIYAPFLYGLYSIKYRLCDYSVFTEGSIGRVRTANASNFEIISFIIGKLVFIVFRFIIPLQYHSLVNLLTYFFIAEFFFGLYLSFGFQVSHSADNLKIVATSVNENDEPTNVDEDWAIHQIKTTQDYGINSYMCLFFSGGVNLQVVHHLFPSISQEYYGELVPIIKKVCDEYDVHYNIQPTFYAAFKSHIDFLYNMGNNENYVRKSVTD.

The Cytochrome b5 heme-binding domain occupies 9–87 (KKLYSWKEIS…LKQYEIGQVS (79 aa)). Heme is bound by residues His-45 and His-68. The next 2 helical transmembrane spans lie at 121–141 (FAFGIIARLIFVYWFLITSYY) and 151–171 (FYLNCLLAIVYSLSNSLFSLH). The short motif at 174 to 178 (HDACH) is the Histidine box-1 element. Residues 187–207 (VWKWLGATYDLFIGASFFYWC) traverse the membrane as a helical segment. Positions 210–215 (HVIGHH) match the Histidine box-2 motif. The next 2 membrane-spanning stretches (helical) occupy residues 289–309 (FEIISFIIGKLVFIVFRFIIP) and 315–335 (LVNLLTYFFIAEFFFGLYLSF). The Histidine box-3 signature appears at 394-398 (QVVHH).

This sequence belongs to the fatty acid desaturase type 1 family. Requires Fe cation as cofactor.

It is found in the membrane. The polypeptide is Probable Delta(5) fatty acid desaturase C (Dictyostelium discoideum (Social amoeba)).